The primary structure comprises 226 residues: Neuron-specific vesicular protein calcyon (226 aa).

The interval 1–21 (MVKLGCSFSGKPGKEAGDQDG) is disordered. The Extracellular portion of the chain corresponds to 1–88 (MVKLGCSFSG…EEGRRLPTAR (88 aa)). The chain crosses the membrane as a helical span at residues 89–109 (MIAFAMALLGCVLIMYKAIWY). Over 110–226 (DQFTCPDGFL…AEGVPSQPPK (117 aa)) the chain is Cytoplasmic. The interval 177–226 (HKGTTPAAMAVSTAAAAAAAEGTEPSGKSLDTREKEDPQKAEGVPSQPPK) is disordered. Over residues 183-196 (AAMAVSTAAAAAAA) the composition is skewed to low complexity. Over residues 206 to 216 (LDTREKEDPQK) the composition is skewed to basic and acidic residues.

The protein belongs to the NSG family. As to quaternary structure, interacts with CLTA. In terms of tissue distribution, most abundant in brain. Also expressed in testis and ovary and, at much lower levels, in kidney and heart.

The protein localises to the cytoplasmic vesicle membrane. It is found in the cell membrane. Interacts with clathrin light chain A and stimulates clathrin self-assembly and clathrin-mediated endocytosis. The sequence is that of Neuron-specific vesicular protein calcyon (Caly) from Mus musculus (Mouse).